Consider the following 444-residue polypeptide: Orexin receptor type 2 (444 aa).

Positions 1 to 10 (MSGTKLEDSP) are enriched in basic and acidic residues. A disordered region spans residues 1-20 (MSGTKLEDSPPCRNWSSASE). Topologically, residues 1 to 54 (MSGTKLEDSPPCRNWSSASELNETQEPFLNPTDYDDEEFLRYLWREYLHPKEYE) are extracellular. N-linked (GlcNAc...) asparagine glycosylation is found at N14 and N22. The interval 33-49 (DYDDEEFLRYLWREYLH) is required for response to orexin-A. The helical transmembrane segment at 55 to 75 (WVLIAGYIIVFVVALIGNVLV) threads the bilayer. Residues 76–88 (CVAVWKNHHMRTV) are Cytoplasmic-facing. The helical transmembrane segment at 89–110 (TNYFIVNLSLADVLVTITCLPA) threads the bilayer. Topologically, residues 111–127 (TLVVDITETWFFGQSLC) are extracellular. Cysteines 127 and 210 form a disulfide. Residues 128–150 (KVIPYLQTVSVSVSVLTLSCIAL) form a helical membrane-spanning segment. The Cytoplasmic segment spans residues 151–170 (DRWYAICHPLMFKSTAKRAR). Residues 171–191 (NSIVIIWIVSCIIMIPQAIVM) form a helical membrane-spanning segment. At 192 to 222 (ECSTVFPGLANKTTLFTVCDERWGGEIYPKM) the chain is on the extracellular side. A glycan (N-linked (GlcNAc...) asparagine) is linked at N202. Residues 223 to 243 (YHICFFLVTYMAPLCLMVLAY) form a helical membrane-spanning segment. Topologically, residues 244–304 (LQIFRKLWCR…QIRARRKTAR (61 aa)) are cytoplasmic. A helical membrane pass occupies residues 305 to 326 (MLMIVLLVFAICYLPISILNVL). N324 contributes to the suvorexant binding site. The Extracellular portion of the chain corresponds to 327–342 (KRVFGMFAHTEDRETV). A helical membrane pass occupies residues 343 to 366 (YAWFTFSHWLVYANSAANPIIYNF). Residues 367–444 (LSGKFREEFK…ANGAGPLQNW (78 aa)) are Cytoplasmic-facing.

The protein belongs to the G-protein coupled receptor 1 family.

Its subcellular location is the cell membrane. Its function is as follows. Nonselective, high-affinity receptor for both orexin-A and orexin-B neuropeptides. Triggers an increase in cytoplasmic Ca(2+) levels in response to orexin-A binding. The polypeptide is Orexin receptor type 2 (HCRTR2) (Homo sapiens (Human)).